A 302-amino-acid chain; its full sequence is Methionyl-tRNA formyltransferase (302 aa).

108–111 (SLLP) contacts (6S)-5,6,7,8-tetrahydrofolate. The span at 276 to 288 (REGKRPMEPEEFL) shows a compositional bias: basic and acidic residues. Residues 276 to 302 (REGKRPMEPEEFLRGFPLPEGSRAHTA) are disordered.

It belongs to the Fmt family.

It carries out the reaction L-methionyl-tRNA(fMet) + (6R)-10-formyltetrahydrofolate = N-formyl-L-methionyl-tRNA(fMet) + (6S)-5,6,7,8-tetrahydrofolate + H(+). Attaches a formyl group to the free amino group of methionyl-tRNA(fMet). The formyl group appears to play a dual role in the initiator identity of N-formylmethionyl-tRNA by promoting its recognition by IF2 and preventing the misappropriation of this tRNA by the elongation apparatus. The chain is Methionyl-tRNA formyltransferase from Cereibacter sphaeroides (strain KD131 / KCTC 12085) (Rhodobacter sphaeroides).